Reading from the N-terminus, the 371-residue chain is Putative agmatine deiminase (371 aa).

Cysteine 361 acts as the Amidino-cysteine intermediate in catalysis.

Belongs to the agmatine deiminase family.

The catalysed reaction is agmatine + H2O = N-carbamoylputrescine + NH4(+). The sequence is that of Putative agmatine deiminase from Selenomonas ruminantium.